The sequence spans 415 residues: Transcription factor gsfR2 (415 aa).

A DNA-binding region (zn(2)-C6 fungal-type) is located at residues 9–36 (CITCVQSKRKCDQGLPKCQRCLAKNIHC). The segment at 65-91 (AEEPSRGCQLQRSPARPTSPTHSPHAN) is disordered. Residues 72–88 (CQLQRSPARPTSPTHSP) show a composition bias toward polar residues.

It is found in the nucleus. Functionally, transcription factor that regulates expression of the gene cluster that mediates the biosynthesis of Griseofulvin, an important antifungal drug that has been in use for a long time for treating dermatophyte infections. The protein is Transcription factor gsfR2 of Penicillium aethiopicum.